The chain runs to 96 residues: ATP synthase subunit f, mitochondrial (96 aa).

This sequence belongs to the ATPase F chain family.

It localises to the mitochondrion. The protein localises to the mitochondrion inner membrane. Mitochondrial membrane ATP synthase (F(1)F(0) ATP synthase or Complex V) produces ATP from ADP in the presence of a proton gradient across the membrane which is generated by electron transport complexes of the respiratory chain. F-type ATPases consist of two structural domains, F(1) - containing the extramembraneous catalytic core and F(0) - containing the membrane proton channel, linked together by a central stalk and a peripheral stalk. During catalysis, ATP synthesis in the catalytic domain of F(1) is coupled via a rotary mechanism of the central stalk subunits to proton translocation. In Schizosaccharomyces pombe (strain 972 / ATCC 24843) (Fission yeast), this protein is ATP synthase subunit f, mitochondrial (atp17).